The following is a 307-amino-acid chain: Probable transposase for transposon Tn903 (307 aa).

Required for transposition of transposon Tn903. In Escherichia coli, this protein is Probable transposase for transposon Tn903.